Here is a 304-residue protein sequence, read N- to C-terminus: GTP cyclohydrolase FolE2 (304 aa).

This sequence belongs to the GTP cyclohydrolase IV family.

It carries out the reaction GTP + H2O = 7,8-dihydroneopterin 3'-triphosphate + formate + H(+). It functions in the pathway cofactor biosynthesis; 7,8-dihydroneopterin triphosphate biosynthesis; 7,8-dihydroneopterin triphosphate from GTP: step 1/1. In terms of biological role, converts GTP to 7,8-dihydroneopterin triphosphate. The polypeptide is GTP cyclohydrolase FolE2 (Chromohalobacter salexigens (strain ATCC BAA-138 / DSM 3043 / CIP 106854 / NCIMB 13768 / 1H11)).